The primary structure comprises 314 residues: Ferrochelatase (314 aa).

His188 and Glu269 together coordinate Fe cation.

Belongs to the ferrochelatase family.

The protein resides in the cytoplasm. It carries out the reaction heme b + 2 H(+) = protoporphyrin IX + Fe(2+). Its pathway is porphyrin-containing compound metabolism; protoheme biosynthesis; protoheme from protoporphyrin-IX: step 1/1. Its function is as follows. Catalyzes the ferrous insertion into protoporphyrin IX. In Campylobacter fetus subsp. fetus (strain 82-40), this protein is Ferrochelatase.